The chain runs to 267 residues: Hydroxynaphthalene reductase-like protein Arp2 (267 aa).

NADP(+)-binding residues include isoleucine 25, asparagine 45, aspartate 71, and asparagine 98. Catalysis depends on proton donor residues serine 147 and serine 148. NADP(+)-binding residues include tyrosine 162, lysine 166, valine 195, and threonine 197. The active-site Proton acceptor is the tyrosine 162. Lysine 166 acts as the Lowers pKa of active site Tyr in catalysis.

The protein belongs to the short-chain dehydrogenases/reductases (SDR) family.

Hydroxynaphthalene reductase-like protein; part of the Pks2 gene cluster that mediates the formation of infectious structures (appressoria), enabling these fungi to kill insects faster. The product of the Pks2 gene cluster is different from the one of Pks1 and has still not been identified. The protein is Hydroxynaphthalene reductase-like protein Arp2 of Metarhizium brunneum (strain ARSEF 3297).